Reading from the N-terminus, the 232-residue chain is Phosphatidylserine decarboxylase proenzyme (232 aa).

The Schiff-base intermediate with substrate; via pyruvic acid role is filled by S190. Position 190 is a pyruvic acid (Ser); by autocatalysis (S190).

The protein belongs to the phosphatidylserine decarboxylase family. PSD-A subfamily. Heterodimer of a large membrane-associated beta subunit and a small pyruvoyl-containing alpha subunit. Pyruvate is required as a cofactor. In terms of processing, is synthesized initially as an inactive proenzyme. Formation of the active enzyme involves a self-maturation process in which the active site pyruvoyl group is generated from an internal serine residue via an autocatalytic post-translational modification. Two non-identical subunits are generated from the proenzyme in this reaction, and the pyruvate is formed at the N-terminus of the alpha chain, which is derived from the carboxyl end of the proenzyme. The post-translation cleavage follows an unusual pathway, termed non-hydrolytic serinolysis, in which the side chain hydroxyl group of the serine supplies its oxygen atom to form the C-terminus of the beta chain, while the remainder of the serine residue undergoes an oxidative deamination to produce ammonia and the pyruvoyl prosthetic group on the alpha chain.

Its subcellular location is the cell membrane. The enzyme catalyses a 1,2-diacyl-sn-glycero-3-phospho-L-serine + H(+) = a 1,2-diacyl-sn-glycero-3-phosphoethanolamine + CO2. The protein operates within phospholipid metabolism; phosphatidylethanolamine biosynthesis; phosphatidylethanolamine from CDP-diacylglycerol: step 2/2. Its function is as follows. Catalyzes the formation of phosphatidylethanolamine (PtdEtn) from phosphatidylserine (PtdSer). The chain is Phosphatidylserine decarboxylase proenzyme from Cereibacter sphaeroides (strain ATCC 17023 / DSM 158 / JCM 6121 / CCUG 31486 / LMG 2827 / NBRC 12203 / NCIMB 8253 / ATH 2.4.1.) (Rhodobacter sphaeroides).